The following is a 1886-amino-acid chain: Polyprotein P3 (1886 aa).

Disordered regions lie at residues 1 to 24 (MATR…SGVP), 420 to 466 (RCDS…MQDD), and 478 to 529 (RMKK…NQPE). Positions 9–20 (VTQTDGSRTATE) are enriched in polar residues. The span at 488 to 498 (QQALSSQAQEE) shows a compositional bias: low complexity. The CCHC-type zinc finger occupies 879–896 (CKCYICGQEGHYANQCRN). The region spanning 1215–1292 (INAIVDTGAT…GLSPGIQMII (78 aa)) is the Peptidase A2 domain. The active-site For protease activity is Asp-1220. One can recognise a Reverse transcriptase domain in the interval 1425-1615 (LLQMKVIRPS…PEIDFLGASL (191 aa)). The RNase H type-1 domain occupies 1706–1841 (KDSFIIIETD…ADALSRMINF (136 aa)). Mg(2+)-binding residues include Asp-1715, Glu-1758, Asp-1784, and Asp-1833.

Polyprotein P3 is presumably proteolytically cleaved into several chains by viral protease.

It catalyses the reaction Endonucleolytic cleavage to 5'-phosphomonoester.. It carries out the reaction DNA(n) + a 2'-deoxyribonucleoside 5'-triphosphate = DNA(n+1) + diphosphate. In terms of biological role, capsid protein self assembles to form a bacilliform capsid about 90-900 nm in length. The capsid encapsulates the genomic dsDNA. Following virus entry into host cell, provides nuclear import of the viral genome. Virus particles do not enter the nucleus, but are targeted to the nuclear membrane through the interaction with host importins. This chain is Polyprotein P3, found in Commelina yellow mottle virus (CoYMV).